The sequence spans 87 residues: Transcriptional regulator PINT87aa (87 aa).

In terms of assembly, interacts with PAF1 complex member PAF1. Interacts with transcription factor FOXM1. In terms of tissue distribution, expressed in brain, liver, kidney and stomach with lower levels in breast, intestine, thyroid and pancreas.

It localises to the nucleus. Enhances the binding of the PAF1 complex to target gene promoters and plays a role in negative regulation of transcription. May function as an anchor to keep the PAF1 complex on target gene promoters, sequentially pausing RNA polymerase II-induced mRNA elongation. Inhibits FOXM1-mediated transcription of PHB2. The chain is Transcriptional regulator PINT87aa from Homo sapiens (Human).